The following is a 163-amino-acid chain: 2-C-methyl-D-erythritol 2,4-cyclodiphosphate synthase (163 aa).

A divalent metal cation contacts are provided by Asp-9 and His-11. Residues 9-11 and 36-37 each bind 4-CDP-2-C-methyl-D-erythritol 2-phosphate; these read DVH and HS. His-44 is a binding site for a divalent metal cation. Residues 58 to 60, 63 to 67, 134 to 137, Phe-141, and Arg-144 each bind 4-CDP-2-C-methyl-D-erythritol 2-phosphate; these read DIG, FPDDD, and TTSE.

Belongs to the IspF family. In terms of assembly, homotrimer. The cofactor is a divalent metal cation.

The catalysed reaction is 4-CDP-2-C-methyl-D-erythritol 2-phosphate = 2-C-methyl-D-erythritol 2,4-cyclic diphosphate + CMP. It participates in isoprenoid biosynthesis; isopentenyl diphosphate biosynthesis via DXP pathway; isopentenyl diphosphate from 1-deoxy-D-xylulose 5-phosphate: step 4/6. Involved in the biosynthesis of isopentenyl diphosphate (IPP) and dimethylallyl diphosphate (DMAPP), two major building blocks of isoprenoid compounds. Catalyzes the conversion of 4-diphosphocytidyl-2-C-methyl-D-erythritol 2-phosphate (CDP-ME2P) to 2-C-methyl-D-erythritol 2,4-cyclodiphosphate (ME-CPP) with a corresponding release of cytidine 5-monophosphate (CMP). This is 2-C-methyl-D-erythritol 2,4-cyclodiphosphate synthase from Halorhodospira halophila (strain DSM 244 / SL1) (Ectothiorhodospira halophila (strain DSM 244 / SL1)).